Here is a 327-residue protein sequence, read N- to C-terminus: Methionyl-tRNA formyltransferase (327 aa).

(6S)-5,6,7,8-tetrahydrofolate is bound at residue 122–125 (SLLP).

Belongs to the Fmt family.

The enzyme catalyses L-methionyl-tRNA(fMet) + (6R)-10-formyltetrahydrofolate = N-formyl-L-methionyl-tRNA(fMet) + (6S)-5,6,7,8-tetrahydrofolate + H(+). In terms of biological role, attaches a formyl group to the free amino group of methionyl-tRNA(fMet). The formyl group appears to play a dual role in the initiator identity of N-formylmethionyl-tRNA by promoting its recognition by IF2 and preventing the misappropriation of this tRNA by the elongation apparatus. The polypeptide is Methionyl-tRNA formyltransferase (Ralstonia pickettii (strain 12J)).